Here is a 132-residue protein sequence, read N- to C-terminus: Spermatogenesis-associated protein 33 (132 aa).

The tract at residues 1-60 (MGQSKSKPREKKEEEKSTTTLVTKSKEKVMEKEAKQSDKESQPAESLLFATSKHSRPSSS) is interaction with ATG16L1. The tract at residues 1–81 (MGQSKSKPRE…SKKRSVIPQI (81 aa)) is disordered. A compositionally biased stretch (basic and acidic residues) spans 24-42 (KSKEKVMEKEAKQSDKESQ). The interaction with VDAC2 stretch occupies residues 61–132 (SEDKPETKQR…IAAYDVHNTE (72 aa)). The PQIIIT signature appears at 79–84 (PQIIIT). Residue Ser-87 is modified to Phosphoserine. The disordered stretch occupies residues 110-132 (DWGPYHRHRSPSTIAAYDVHNTE).

Interacts (via PQIIIT motif) with PPP3R2 and PPP3CC. Interacts with VDAC2. Interacts with ATG16L1 (via WD repeats). Interacts with PPP3R1, PPP3CA and PPP3CB. As to expression, predominantly expressed in the testis (at protein level). Expressed in the sperm midpiece (at protein level).

The protein resides in the cytoplasm. The protein localises to the cytosol. Its subcellular location is the nucleus. It localises to the mitochondrion. In terms of biological role, plays an important role in sperm motility and male fertility. Required for sperm midpiece flexibility and for the localization of sperm calcineurin to the mitochondria. Promotes mitophagy as well as acts as an autophagy mediator in male germline cells. Links damaged mitochondria to autophagosomes via its binding to the outer mitochondrial membrane protein VDAC2, as well as to key autophagy machinery component ATG16L1. The chain is Spermatogenesis-associated protein 33 (Spata33) from Mus musculus (Mouse).